The sequence spans 416 residues: Neurotensin receptor type 2 (416 aa).

Residues 1–32 (METSSPWPPRPSPSAGLSLEARLGVDTRLWAK) are Extracellular-facing. A helical membrane pass occupies residues 33-55 (VLFTALYSLIFAFGTAGNALSVH). The Cytoplasmic portion of the chain corresponds to 56 to 64 (VVLKARAGR). A helical membrane pass occupies residues 65–87 (PGRLRYHVLSLALSALLLLLVSM). Residues 88 to 109 (PMELYNFVWSHYPWVFGDLGCR) lie on the Extracellular side of the membrane. C108 and C194 are disulfide-bonded. The helical transmembrane segment at 110-131 (GYYFVRELCAYATVLSVASLSA) threads the bilayer. Over 132–154 (ERCLAVCQPLRARRLLTPRRTRR) the chain is Cytoplasmic. Residues 155-176 (LLSLVWVASLGLALPMAVIMGQ) traverse the membrane as a helical segment. Residues 177–216 (KHEVESADGEPEPASRVCTVLVSRATLQVFIQVNVLVSFA) lie on the Extracellular side of the membrane. The helical transmembrane segment at 217–237 (LPLALTAFLNGITVNHLMALY) threads the bilayer. Topologically, residues 238–297 (SQVPSASAQVSSIPSRLELLSEEGLLGFITWRKTLSLGVQASLVRHKDASQIRSLQHSAQ) are cytoplasmic. A helical membrane pass occupies residues 298–318 (VLRAIVAVYVICWLPYHARRL). The Extracellular portion of the chain corresponds to 319–337 (MYCYIPDDGWTNELYDFYH). The helical transmembrane segment at 338 to 358 (YFYMVTNTLFYVSSAVTPILY) threads the bilayer. The Cytoplasmic portion of the chain corresponds to 359–416 (NAVSSSFRKLFLESLGSLCGEQHSLVPLPQEAPESTTSTYSFRLWGSPRNPSLGEIQV). A lipid anchor (S-palmitoyl cysteine) is attached at C377. Phosphoserine is present on S410.

Belongs to the G-protein coupled receptor 1 family. Neurotensin receptor subfamily. NTSR2 sub-subfamily. As to expression, abundant in cortex and hypothalamus, and lower levels seen in the heart and intestine.

The protein resides in the cell membrane. Its function is as follows. Receptor for the tridecapeptide neurotensin. It is associated with G proteins that activate a phosphatidylinositol-calcium second messenger system. The protein is Neurotensin receptor type 2 (Ntsr2) of Rattus norvegicus (Rat).